The primary structure comprises 693 residues: Elongation factor G (693 aa).

The 275-residue stretch at 8–282 folds into the tr-type G domain; the sequence is EKTRNIGIMA…AVVDYLPSPL (275 aa). Residues 17–24, 81–85, and 135–138 contribute to the GTP site; these read AHVDAGKT, DTPGH, and NKMD.

The protein belongs to the TRAFAC class translation factor GTPase superfamily. Classic translation factor GTPase family. EF-G/EF-2 subfamily.

It is found in the cytoplasm. Its function is as follows. Catalyzes the GTP-dependent ribosomal translocation step during translation elongation. During this step, the ribosome changes from the pre-translocational (PRE) to the post-translocational (POST) state as the newly formed A-site-bound peptidyl-tRNA and P-site-bound deacylated tRNA move to the P and E sites, respectively. Catalyzes the coordinated movement of the two tRNA molecules, the mRNA and conformational changes in the ribosome. This chain is Elongation factor G, found in Streptococcus mutans serotype c (strain ATCC 700610 / UA159).